Consider the following 243-residue polypeptide: Cytochrome c oxidase subunit 2 (243 aa).

The Mitochondrial intermembrane portion of the chain corresponds to 1–34 (MNNIIHNDAPTPWGIYFQDGASPVYDGIVELHDQ). A helical membrane pass occupies residues 35–55 (VLFYLLIVLVGVSWILFSTIL). The Mitochondrial matrix portion of the chain corresponds to 56–74 (RFRGSGIVHKYHNHSTTIE). A helical membrane pass occupies residues 75–97 (FVWTVSPALLLIAIAFPSFKLLY). At 98–243 (LMDEVIDPSI…EKFLSWLDNQ (146 aa)) the chain is on the mitochondrial intermembrane side. Cu cation is bound by residues His-178, Cys-213, Glu-215, Cys-217, His-221, and Met-224. A Mg(2+)-binding site is contributed by Glu-215.

Belongs to the cytochrome c oxidase subunit 2 family. As to quaternary structure, component of the cytochrome c oxidase (complex IV, CIV), a multisubunit enzyme composed of a catalytic core of 3 subunits and several supernumerary subunits. The complex exists as a monomer or a dimer and forms supercomplexes (SCs) in the inner mitochondrial membrane with ubiquinol-cytochrome c oxidoreductase (cytochrome b-c1 complex, complex III, CIII). It depends on Cu cation as a cofactor.

The protein resides in the mitochondrion inner membrane. The enzyme catalyses 4 Fe(II)-[cytochrome c] + O2 + 8 H(+)(in) = 4 Fe(III)-[cytochrome c] + 2 H2O + 4 H(+)(out). Component of the cytochrome c oxidase, the last enzyme in the mitochondrial electron transport chain which drives oxidative phosphorylation. The respiratory chain contains 3 multisubunit complexes succinate dehydrogenase (complex II, CII), ubiquinol-cytochrome c oxidoreductase (cytochrome b-c1 complex, complex III, CIII) and cytochrome c oxidase (complex IV, CIV), that cooperate to transfer electrons derived from NADH and succinate to molecular oxygen, creating an electrochemical gradient over the inner membrane that drives transmembrane transport and the ATP synthase. Cytochrome c oxidase is the component of the respiratory chain that catalyzes the reduction of oxygen to water. Electrons originating from reduced cytochrome c in the intermembrane space (IMS) are transferred via the dinuclear copper A center (CU(A)) of subunit 2 and heme A of subunit 1 to the active site in subunit 1, a binuclear center (BNC) formed by heme A3 and copper B (CU(B)). The BNC reduces molecular oxygen to 2 water molecules using 4 electrons from cytochrome c in the IMS and 4 protons from the mitochondrial matrix. In Pneumocystis carinii, this protein is Cytochrome c oxidase subunit 2.